The sequence spans 475 residues: Ankyrin repeat, SAM and basic leucine zipper domain-containing protein 1 (475 aa).

The interval 1-25 (MAAGPLRGLAVAGGGESSDSEDDGW) is disordered. A phosphoserine mark is found at serine 17, serine 18, and serine 20. ANK repeat units follow at residues 45–74 (ERQE…SVDT), 78–107 (YGWT…NASF), 110–144 (DKQT…DPNV), 148–177 (RLMT…EVNT), 181–210 (NGYT…NKMI), and 214–243 (DGKT…PLEG). Residues 272–334 (SYTAFGDLEI…KIMAALKELE (63 aa)) enclose the SAM domain.

In terms of assembly, interacts with DDX4, PIWIL1, RANBP9 and TDRD1.

It is found in the cytoplasm. In terms of biological role, plays a central role during spermatogenesis by repressing transposable elements and preventing their mobilization, which is essential for the germline integrity. Acts via the piRNA metabolic process, which mediates the repression of transposable elements during meiosis by forming complexes composed of piRNAs and Piwi proteins and governs the methylation and subsequent repression of transposons. Its association with pi-bodies suggests a participation in the primary piRNAs metabolic process. Required prior to the pachytene stage to facilitate the production of multiple types of piRNAs, including those associated with repeats involved in the regulation of retrotransposons. May act by mediating protein-protein interactions during germ cell maturation. In Bos taurus (Bovine), this protein is Ankyrin repeat, SAM and basic leucine zipper domain-containing protein 1 (ASZ1).